The sequence spans 2388 residues: Spectrin beta chain, non-erythrocytic 2 (2388 aa).

Ser2 bears the N-acetylserine mark. Residues 2–278 (SSTLSPTDFD…IITYVATYYH (277 aa)) are actin-binding. A phosphoserine mark is found at Ser6 and Ser31. 2 consecutive Calponin-homology (CH) domains span residues 57–161 (AVQK…LRFQ) and 176–281 (KSAK…HYFS). Spectrin repeat units follow at residues 306–414 (LVEK…LALR), 427–527 (AARF…RERL), 532–639 (ELQK…RLEE), 642–744 (RLWR…QRLA), 749–849 (LYQF…RALE), and 856–954 (TMLS…KAAL). A Phosphoserine modification is found at Ser959. 11 Spectrin repeats span residues 960–1063 (IQNY…SLGE), 1066–1169 (RLQD…GRLA), 1174–1266 (FQGF…NQEA), 1279–1379 (EQQH…ARSL), 1384–1485 (RAEL…RRLQ), 1489–1586 (EQHQ…RLEE), 1589–1692 (RAQQ…RLQE), 1696–1797 (LCQL…GQVL), 1801–1904 (YELQ…QLLL), 1910–2010 (FRFF…DWLQ), and 2017–2078 (VFGR…LTAL). Ser1073 is modified (phosphoserine). The residue at position 1574 (Ser1574) is a Phosphoserine. The segment covering 2080–2096 (ERENEQKRKREEEERRK) has biased composition (basic and acidic residues). Disordered stretches follow at residues 2080-2112 (EREN…EGSL) and 2124-2207 (DGTQ…HVAT). Over residues 2124–2163 (DGTQSKLPPSTQAPSINGVCTDTESSQPLLEQQRLEQSNV) the composition is skewed to polar residues. Residues Ser2169 and Ser2199 each carry the phosphoserine modification. A PH domain is found at 2218–2328 (QEQMEGTLCR…WLRVVNAAIA (111 aa)). The tract at residues 2333–2388 (ASGEPEEPVVPSASRGLTRAMTMPPVSQPEGSIVLRSKDGREREREKRFSFFKKNK) is disordered. Thr2354 bears the Phosphothreonine mark. The residue at position 2359 (Ser2359) is a Phosphoserine. A compositionally biased stretch (basic and acidic residues) spans 2368-2381 (RSKDGREREREKRF).

Belongs to the spectrin family. As to expression, abundantly transcribed in the brain. Neurons are the predominant cell-type to express the gene. Found abundantly in Purkinje cells.

The protein localises to the cytoplasm. Its subcellular location is the cytoskeleton. The protein resides in the cell cortex. Probably plays an important role in neuronal membrane skeleton. The chain is Spectrin beta chain, non-erythrocytic 2 (Sptbn2) from Rattus norvegicus (Rat).